We begin with the raw amino-acid sequence, 278 residues long: Biotin synthase (278 aa).

The region spanning 1–227 is the Radical SAM core domain; it reads MQIMLCAISN…QSVVMVAGGR (227 aa). [4Fe-4S] cluster-binding residues include Cys16, Cys20, and Cys23. Cys60, Cys95, and Cys153 together coordinate [2Fe-2S] cluster.

The protein belongs to the radical SAM superfamily. Biotin synthase family. Homodimer. The cofactor is [4Fe-4S] cluster. It depends on [2Fe-2S] cluster as a cofactor.

The catalysed reaction is (4R,5S)-dethiobiotin + (sulfur carrier)-SH + 2 reduced [2Fe-2S]-[ferredoxin] + 2 S-adenosyl-L-methionine = (sulfur carrier)-H + biotin + 2 5'-deoxyadenosine + 2 L-methionine + 2 oxidized [2Fe-2S]-[ferredoxin]. It functions in the pathway cofactor biosynthesis; biotin biosynthesis; biotin from 7,8-diaminononanoate: step 2/2. Catalyzes the conversion of dethiobiotin (DTB) to biotin by the insertion of a sulfur atom into dethiobiotin via a radical-based mechanism. The chain is Biotin synthase from Campylobacter jejuni (strain RM1221).